Here is a 113-residue protein sequence, read N- to C-terminus: Large ribosomal subunit protein uL22 (113 aa).

The protein belongs to the universal ribosomal protein uL22 family. Part of the 50S ribosomal subunit.

Its function is as follows. This protein binds specifically to 23S rRNA; its binding is stimulated by other ribosomal proteins, e.g. L4, L17, and L20. It is important during the early stages of 50S assembly. It makes multiple contacts with different domains of the 23S rRNA in the assembled 50S subunit and ribosome. In terms of biological role, the globular domain of the protein is located near the polypeptide exit tunnel on the outside of the subunit, while an extended beta-hairpin is found that lines the wall of the exit tunnel in the center of the 70S ribosome. The chain is Large ribosomal subunit protein uL22 from Bacillus cereus (strain ATCC 10987 / NRS 248).